The following is a 249-amino-acid chain: MADEAQAPPAEGAPPAEGEAPPPAEGAEGAVEGGEAAPPAEPAEPIKHSYTLFYFNVKALAEPLRYLFAYGNQEYEDVRVTRDEWPALKPTMPMGQMPVLEVDGKRVHQSISMARFLAKTVGLCGATPWEDLQIDIVVDTINDFRLKIAVVSYEPEDEIKEKKLVTLNAEVIPFYLEKLEQTVKDNDGHLALGKLTWADVYFAGITDYMNYMVKRDLLEPYPALRGVVDAVNALEPIKAWIEKRPVTEV.

Over residues 1-38 (MADEAQAPPAEGAPPAEGEAPPPAEGAEGAVEGGEAAP) the composition is skewed to low complexity. The tract at residues 1–42 (MADEAQAPPAEGAPPAEGEAPPPAEGAEGAVEGGEAAPPAEP) is disordered. The region spanning 48–125 (HSYTLFYFNV…FLAKTVGLCG (78 aa)) is the GST N-terminal domain. Residues Tyr-54, Trp-85, Lys-89, 96–97 (QM), and 109–110 (QS) contribute to the glutathione site. Residues 127–249 (TPWEDLQIDI…WIEKRPVTEV (123 aa)) form the GST C-terminal domain.

The protein belongs to the GST superfamily. Sigma family. As to quaternary structure, homodimer.

It carries out the reaction RX + glutathione = an S-substituted glutathione + a halide anion + H(+). In terms of biological role, conjugation of reduced glutathione to a wide number of exogenous and endogenous hydrophobic electrophiles. May be involved in the detoxification of metabolites produced during cellular division and morphogenesis. The chain is Glutathione S-transferase S1 from Drosophila melanogaster (Fruit fly).